Here is a 437-residue protein sequence, read N- to C-terminus: Ribosomal protein uS12 methylthiotransferase RimO (437 aa).

Positions 3–118 constitute an MTTase N-terminal domain; that stretch reads KKFYITTLGC…AGKILREKFP (116 aa). Residues cysteine 12, cysteine 48, cysteine 81, cysteine 157, cysteine 161, and cysteine 164 each contribute to the [4Fe-4S] cluster site. The Radical SAM core domain occupies 143–370; that stretch reads NYSKPYAYVK…RDSHLEILEE (228 aa). The region spanning 373 to 437 is the TRAM domain; sequence ESRIGRTYDA…YEYDMNGTWV (65 aa).

The protein belongs to the methylthiotransferase family. RimO subfamily. [4Fe-4S] cluster serves as cofactor.

It localises to the cytoplasm. The enzyme catalyses L-aspartate(89)-[ribosomal protein uS12]-hydrogen + (sulfur carrier)-SH + AH2 + 2 S-adenosyl-L-methionine = 3-methylsulfanyl-L-aspartate(89)-[ribosomal protein uS12]-hydrogen + (sulfur carrier)-H + 5'-deoxyadenosine + L-methionine + A + S-adenosyl-L-homocysteine + 2 H(+). Its function is as follows. Catalyzes the methylthiolation of an aspartic acid residue of ribosomal protein uS12. This is Ribosomal protein uS12 methylthiotransferase RimO from Leptospira interrogans serogroup Icterohaemorrhagiae serovar copenhageni (strain Fiocruz L1-130).